Reading from the N-terminus, the 274-residue chain is DNA-directed RNA polymerase subunit Rpo3 (274 aa).

[3Fe-4S] cluster contacts are provided by C202, C205, and C208.

The protein belongs to the archaeal Rpo3/eukaryotic RPB3 RNA polymerase subunit family. In terms of assembly, part of the RNA polymerase complex. Requires [3Fe-4S] cluster as cofactor.

It is found in the cytoplasm. The catalysed reaction is RNA(n) + a ribonucleoside 5'-triphosphate = RNA(n+1) + diphosphate. DNA-dependent RNA polymerase (RNAP) catalyzes the transcription of DNA into RNA using the four ribonucleoside triphosphates as substrates. This chain is DNA-directed RNA polymerase subunit Rpo3, found in Methanobrevibacter smithii (strain ATCC 35061 / DSM 861 / OCM 144 / PS).